The sequence spans 491 residues: MSNILRRGRLEAAPDEEILRYASSMETDRWIFSADIAVDLAHTVMLKEQGIISAEDCSKILAGLLKIREEGMEKLDFSYEDIHISLESRLIDMVGEDVGGRMHSGRSRNDEVATCIRLTLREELLGLLEEIFALRKTLVSLAEKHTETLMPGFTHLQHAQPTTLAHHLCAHEAALGRDFDRVQDAFSRVNLCPLGAAAFASTGFNLNRKRTQELLGFEGLLENSMDAVSSRDFLIECASVFSNLMINLSRMAEELVIWSSSEFNFIELDDTYASTSSIMPQKKNPDTAELMRGKTGVAVGALMSLLTICKGLPLSYNRDLQEATPNIWRSVETVRASVRVMEGMVRTMKIHPEVLSAQSVTGFTTATELADTFVREAGIPFRTAHQIVGMLAREGEKPTIEKIDSVAEIVLGESLSSRGLTEKMIKEALNPVSNIKRRKIEGGPAPEEMQHYIGRQQTELELNEQEIATIKDSIDSAFEALLEVVDEYRKV.

This sequence belongs to the lyase 1 family. Argininosuccinate lyase subfamily.

Its subcellular location is the cytoplasm. It catalyses the reaction 2-(N(omega)-L-arginino)succinate = fumarate + L-arginine. Its pathway is amino-acid biosynthesis; L-arginine biosynthesis; L-arginine from L-ornithine and carbamoyl phosphate: step 3/3. The protein is Argininosuccinate lyase of Methanosarcina acetivorans (strain ATCC 35395 / DSM 2834 / JCM 12185 / C2A).